The primary structure comprises 278 residues: Complement component 1 Q subcomponent-binding protein, mitochondrial (278 aa).

The transit peptide at Met-1–Gly-70 directs the protein to the mitochondrion. The C1q binding stretch occupies residues Thr-73 to Glu-90. Ser-84 is subject to Phosphoserine. 2 positions are modified to N6-acetyllysine: Lys-88 and Lys-91. Residues Ile-136–Pro-164 form a disordered region. The interval Phe-166–Ala-209 is interaction with MAVS. A Phosphotyrosine modification is found at Tyr-185. Ser-197 and Ser-201 each carry phosphoserine. Thr-210 carries the post-translational modification Phosphothreonine.

This sequence belongs to the MAM33 family. As to quaternary structure, homotrimer; three monomers form a donut-shaped structure with an unusually asymmetric charge distribution on the surface. Interacts with CDK13, HRK, VTN, NFYB, ADRA1B, FOXC1, DDX21, DDX50, NCL, SRSF1 and SRSF9. Interacts with CD93; the association may represent a cell surface C1q receptor. Interacts with KRT1; the association represents a cell surface kininogen receptor. Interacts with CD209; the interaction is indicative for a C1q:C1QBP:CD209 signaling complex. Interacts with FBL and RRP1; the respective interactions with C1QBP are competitive. Probably associates with the mitoribosome. Interacts with MAVS; the interaction occurs upon viral transfection. Interacts with PPIF. Interacts with U2AF1L4. Interacts with PLEKHN1. Interacts with VGF-derived peptide TLQP-21. Interacts with MRE11 and RAD50; forming the MRC (MRE11-RAD50-C1QBP) complex that inhibits the activity of MRE11.

It is found in the mitochondrion matrix. Its subcellular location is the nucleus. The protein resides in the cell membrane. The protein localises to the secreted. It localises to the cytoplasm. It is found in the nucleolus. In terms of biological role, multifunctional and multicompartmental protein involved in inflammation and infection processes, ribosome biogenesis, protein synthesis in mitochondria, regulation of apoptosis, transcriptional regulation and pre-mRNA splicing. At the cell surface is thought to act as an endothelial receptor for plasma proteins of the complement and kallikrein-kinin cascades. Putative receptor for C1q; specifically binds to the globular 'heads' of C1q thus inhibiting C1; may perform the receptor function through a complex with C1qR/CD93. In complex with cytokeratin-1/KRT1 is a high affinity receptor for kininogen-1/HMWK. Can also bind other plasma proteins, such as coagulation factor XII leading to its autoactivation. May function to bind initially fluid kininogen-1 to the cell membrane. The secreted form may enhance both extrinsic and intrinsic coagulation pathways. It is postulated that the cell surface form requires docking with transmembrane proteins for downstream signaling which might be specific for a cell-type or response. By acting as C1q receptor is involved in chemotaxis of immature dendritic cells and neutrophils and is proposed to signal through CD209/DC-SIGN on immature dendritic cells, through integrin alpha-4/beta-1 during trophoblast invasion of the decidua, and through integrin beta-1 during endothelial cell adhesion and spreading. Signaling involved in inhibition of innate immune response is implicating the PI3K-AKT/PKB pathway. Required for protein synthesis in mitochondria. In mitochondrial translation may be involved in formation of functional 55S mitoribosomes; the function seems to involve its RNA-binding activity. Acts as a RNA modification reader, which specifically recognizes and binds mitochondrial RNAs modified by C5-methylcytosine (m5C) in response to stress, and promotes recruitment of the mitochondrial degradosome complex, leading to their degradation. May be involved in the nucleolar ribosome maturation process; the function may involve the exchange of FBL for RRP1 in the association with pre-ribosome particles. Involved in regulation of RNA splicing by inhibiting the RNA-binding capacity of SRSF1 and its phosphorylation. Is required for the nuclear translocation of splicing factor U2AF1L4. Involved in regulation of CDKN2A- and HRK-mediated apoptosis. Stabilizes mitochondrial CDKN2A isoform smARF. May be involved in regulation of FOXC1 transcriptional activity and NFY/CCAAT-binding factor complex-mediated transcription. May play a role in antibacterial defense as it can bind to cell surface hyaluronan and inhibit Streptococcus pneumoniae hyaluronate lyase. May be involved in modulation of the immune response; ligation by HCV core protein is resulting in suppression of interleukin-12 production in monocyte-derived dendritic cells. Involved in regulation of antiviral response by inhibiting RIGI- and IFIH1-mediated signaling pathways probably involving its association with MAVS after viral infection. Acts as a regulator of DNA repair via homologous recombination by inhibiting the activity of MRE11: interacts with unphosphorylated MRE11 and RAD50 in absence of DNA damage, preventing formation and activity of the MRN complex. Following DNA damage, dissociates from phosphorylated MRE11, allowing formation of the MRN complex. The chain is Complement component 1 Q subcomponent-binding protein, mitochondrial (C1QBP) from Bos taurus (Bovine).